The following is a 214-amino-acid chain: Pyrrolidone-carboxylate peptidase (214 aa).

Catalysis depends on residues E78, C141, and H165.

The protein belongs to the peptidase C15 family. Homotetramer.

It is found in the cytoplasm. The catalysed reaction is Release of an N-terminal pyroglutamyl group from a polypeptide, the second amino acid generally not being Pro.. Its function is as follows. Removes 5-oxoproline from various penultimate amino acid residues except L-proline. The chain is Pyrrolidone-carboxylate peptidase from Streptococcus pneumoniae (strain 70585).